A 115-amino-acid polypeptide reads, in one-letter code: Double-headed protease inhibitor, submandibular gland (115 aa).

2 consecutive Kazal-like domains span residues 6–66 (IGRE…ACDI) and 67–115 (ECTE…HGEC). 6 disulfides stabilise this stretch: cysteine 12–cysteine 46, cysteine 24–cysteine 43, cysteine 32–cysteine 64, cysteine 68–cysteine 97, cysteine 75–cysteine 94, and cysteine 83–cysteine 115.

Its subcellular location is the secreted. This inhibitor is composed of two homologous actively inhibiting halves: one which inhibits trypsin, the other which inhibits elastase. The chain is Double-headed protease inhibitor, submandibular gland from Canis lupus familiaris (Dog).